The following is a 132-amino-acid chain: Small ribosomal subunit protein uS8 (132 aa).

The protein belongs to the universal ribosomal protein uS8 family. In terms of assembly, part of the 30S ribosomal subunit. Contacts proteins S5 and S12.

Its function is as follows. One of the primary rRNA binding proteins, it binds directly to 16S rRNA central domain where it helps coordinate assembly of the platform of the 30S subunit. In Limosilactobacillus fermentum (strain NBRC 3956 / LMG 18251) (Lactobacillus fermentum), this protein is Small ribosomal subunit protein uS8.